The sequence spans 377 residues: Glutamate 5-kinase (377 aa).

Lys-22 serves as a coordination point for ATP. Residues Ser-62, Asp-149, and Asn-161 each contribute to the substrate site. ATP is bound by residues Thr-181–Asp-182 and Thr-223–Lys-229. Residues Arg-285–Glu-363 enclose the PUA domain.

The protein belongs to the glutamate 5-kinase family.

Its subcellular location is the cytoplasm. The catalysed reaction is L-glutamate + ATP = L-glutamyl 5-phosphate + ADP. It participates in amino-acid biosynthesis; L-proline biosynthesis; L-glutamate 5-semialdehyde from L-glutamate: step 1/2. Functionally, catalyzes the transfer of a phosphate group to glutamate to form L-glutamate 5-phosphate. The protein is Glutamate 5-kinase of Bifidobacterium animalis subsp. lactis (strain AD011).